A 797-amino-acid polypeptide reads, in one-letter code: Short transient receptor potential channel 4-associated protein (797 aa).

An N-acetylalanine modification is found at Ala2. Residues 2-400 (AAAPVAAGSG…VLYVLCVLLM (399 aa)) form an interaction with TNFRSF1A region.

Component of the DCX(TRPC4AP) E3 ubiquitin ligase complex, at least composed of CUL4A, DDB1, TRPC4AP/TRUSS and RBX1. Interacts with MYC. Constitutively associated with TNFRSF1A. Directly interacts with TRADD, TRAF2, CHUK, IKBKB and IKBKG. Interacts with TRPC1, TRPC4 and TRPC5. As to quaternary structure, (Microbial infection) Interacts with Hepatitis B virus (HBV) protein X; leading to prevent ubiquitination of TRPC4AP by SKP2. Phosphorylated by GSK3B; phosphorylation is required for ubiquitination. In terms of processing, ubiquitinated by a SCF (SKP1-CUL1-F-box protein) E3 ubiquitin-protein ligase containing SKP2, leading to its degradation. Phosphorylation by GSK3B is required for ubiquitination.

It is found in the cytoplasm. The protein resides in the perinuclear region. Its pathway is protein modification; protein ubiquitination. Substrate-recognition component of a DCX (DDB1-CUL4-X-box) E3 ubiquitin-protein ligase complex required for cell cycle control. The DCX(TRPC4AP) complex specifically mediates the polyubiquitination and subsequent degradation of MYC as part of the DesCEND (destruction via C-end degrons) pathway. The DesCEND (destruction via C-end degrons) pathway recognizes a C-degron located at the extreme C terminus of target proteins, leading to their ubiquitination and degradation. The DCX(TRPC4AP) complex specifically recognizes proteins with an arginine at the minus 3 position (R-3 motif) at the C-terminus, such as MYC, leading to their ubiquitination and degradation. Also participates in the activation of NFKB1 in response to ligation of TNFRSF1A, possibly by linking TNFRSF1A to the IKK signalosome. Involved in JNK activation via its interaction with TRAF2. Also involved in elevation of endoplasmic reticulum Ca(2+) storage reduction in response to CHRM1. This chain is Short transient receptor potential channel 4-associated protein, found in Homo sapiens (Human).